The sequence spans 251 residues: Sec-independent protein translocase protein TatC (251 aa).

Helical transmembrane passes span 23 to 43, 73 to 93, 104 to 124, 159 to 179, 197 to 217, and 218 to 238; these read AFII…SFLL, SAFT…YLFI, IIAF…IFVF, LVIH…VIIV, IAVV…ILSQ, and FALA…CNFI.

The protein belongs to the TatC family. As to quaternary structure, the Tat system comprises two distinct complexes: a TatABC complex, containing multiple copies of TatA, TatB and TatC subunits, and a separate TatA complex, containing only TatA subunits. Substrates initially bind to the TatABC complex, which probably triggers association of the separate TatA complex to form the active translocon.

The protein resides in the cell inner membrane. Part of the twin-arginine translocation (Tat) system that transports large folded proteins containing a characteristic twin-arginine motif in their signal peptide across membranes. Together with TatB, TatC is part of a receptor directly interacting with Tat signal peptides. This Rickettsia prowazekii (strain Madrid E) protein is Sec-independent protein translocase protein TatC.